A 156-amino-acid chain; its full sequence is Small ribosomal subunit protein uS7 (156 aa).

It belongs to the universal ribosomal protein uS7 family. As to quaternary structure, part of the 30S ribosomal subunit. Contacts proteins S9 and S11.

One of the primary rRNA binding proteins, it binds directly to 16S rRNA where it nucleates assembly of the head domain of the 30S subunit. Is located at the subunit interface close to the decoding center, probably blocks exit of the E-site tRNA. The chain is Small ribosomal subunit protein uS7 from Pseudarthrobacter chlorophenolicus (strain ATCC 700700 / DSM 12829 / CIP 107037 / JCM 12360 / KCTC 9906 / NCIMB 13794 / A6) (Arthrobacter chlorophenolicus).